Consider the following 254-residue polypeptide: MNRRRRIYEGKAKILYEGPEPGTLVQFFKDDATAFNAKKHEVIDGKGVLNNRISEHIFTQLNRIGIPTHFIRRLNMREQLIKEVEIIPLEVVVRNVAAGSLAKHLGLEEGTILPRSIIEFYYKADALNDPMVTEEHITAFGWASPQEIDDIMALAIRVNDFLTGLFLGIGIQLVDFKMECGRLWEGDMMRIVVADEISPDSARLWDITTNDKLDKDRFRRDMGGLVEAYQEVARRLGIMNENDTPRPSGPTLVK.

This sequence belongs to the SAICAR synthetase family.

The enzyme catalyses 5-amino-1-(5-phospho-D-ribosyl)imidazole-4-carboxylate + L-aspartate + ATP = (2S)-2-[5-amino-1-(5-phospho-beta-D-ribosyl)imidazole-4-carboxamido]succinate + ADP + phosphate + 2 H(+). It participates in purine metabolism; IMP biosynthesis via de novo pathway; 5-amino-1-(5-phospho-D-ribosyl)imidazole-4-carboxamide from 5-amino-1-(5-phospho-D-ribosyl)imidazole-4-carboxylate: step 1/2. The polypeptide is Phosphoribosylaminoimidazole-succinocarboxamide synthase (Brucella abortus (strain S19)).